We begin with the raw amino-acid sequence, 157 residues long: 2-C-methyl-D-erythritol 2,4-cyclodiphosphate synthase (157 aa).

Residues aspartate 8 and histidine 10 each coordinate a divalent metal cation. 4-CDP-2-C-methyl-D-erythritol 2-phosphate-binding positions include 8–10 and 34–35; these read DVH and HS. Histidine 42 is a binding site for a divalent metal cation. 4-CDP-2-C-methyl-D-erythritol 2-phosphate-binding positions include 56-58, 132-135, and arginine 142; these read DIG and TTNE.

Belongs to the IspF family. In terms of assembly, homotrimer. Requires a divalent metal cation as cofactor.

The catalysed reaction is 4-CDP-2-C-methyl-D-erythritol 2-phosphate = 2-C-methyl-D-erythritol 2,4-cyclic diphosphate + CMP. It participates in isoprenoid biosynthesis; isopentenyl diphosphate biosynthesis via DXP pathway; isopentenyl diphosphate from 1-deoxy-D-xylulose 5-phosphate: step 4/6. Involved in the biosynthesis of isopentenyl diphosphate (IPP) and dimethylallyl diphosphate (DMAPP), two major building blocks of isoprenoid compounds. Catalyzes the conversion of 4-diphosphocytidyl-2-C-methyl-D-erythritol 2-phosphate (CDP-ME2P) to 2-C-methyl-D-erythritol 2,4-cyclodiphosphate (ME-CPP) with a corresponding release of cytidine 5-monophosphate (CMP). The polypeptide is 2-C-methyl-D-erythritol 2,4-cyclodiphosphate synthase (Pelodictyon phaeoclathratiforme (strain DSM 5477 / BU-1)).